We begin with the raw amino-acid sequence, 273 residues long: Light-independent protochlorophyllide reductase iron-sulfur ATP-binding protein (273 aa).

Residues 12–17 (GIGKST) and Lys41 contribute to the ATP site. Ser16 serves as a coordination point for Mg(2+). Cys97 and Cys131 together coordinate [4Fe-4S] cluster. 182 to 183 (NR) is a binding site for ATP.

Belongs to the NifH/BchL/ChlL family. In terms of assembly, homodimer. Protochlorophyllide reductase is composed of three subunits; BchL, BchN and BchB. The cofactor is [4Fe-4S] cluster.

It carries out the reaction chlorophyllide a + oxidized 2[4Fe-4S]-[ferredoxin] + 2 ADP + 2 phosphate = protochlorophyllide a + reduced 2[4Fe-4S]-[ferredoxin] + 2 ATP + 2 H2O. The protein operates within porphyrin-containing compound metabolism; bacteriochlorophyll biosynthesis (light-independent). Functionally, component of the dark-operative protochlorophyllide reductase (DPOR) that uses Mg-ATP and reduced ferredoxin to reduce ring D of protochlorophyllide (Pchlide) to form chlorophyllide a (Chlide). This reaction is light-independent. The L component serves as a unique electron donor to the NB-component of the complex, and binds Mg-ATP. This Chloroflexus aggregans (strain MD-66 / DSM 9485) protein is Light-independent protochlorophyllide reductase iron-sulfur ATP-binding protein.